The chain runs to 101 residues: Urinary protein 3 (101 aa).

Positions 1–21 are cleaved as a signal peptide; the sequence is MGKHILLLPLGLSLLMSSLLA. In terms of domain architecture, UPAR/Ly6 spans 22-99; it reads LQCFRCISFD…CSATPFCNMV (78 aa). 5 disulfide bridges follow: Cys24-Cys51, Cys27-Cys36, Cys43-Cys70, Cys73-Cys89, and Cys90-Cys96.

The protein resides in the secreted. In Rattus norvegicus (Rat), this protein is Urinary protein 3.